Here is a 477-residue protein sequence, read N- to C-terminus: ACT domain-containing protein ACR1 (477 aa).

ACT domains follow at residues 38-124 (LIKV…REVQ), 134-214 (AFEI…GDVS), 283-358 (MVNV…RASQ), and 361-441 (KLEI…MMPR). The Bipartite nuclear localization signal signature appears at 329 to 345 (KKNGGTLETEGQRERLR).

As to expression, expressed in flowers and siliques.

It localises to the nucleus. May bind amino acids. The polypeptide is ACT domain-containing protein ACR1 (Arabidopsis thaliana (Mouse-ear cress)).